A 253-amino-acid chain; its full sequence is MGKTLVFVNQKGGVGKTTSAINLGAYLALAGKKTLLVDFDPQGNMSSGLGLARGLTVYDLLAGKAHINSVLRTTPVHNLFAIPASIDLSGATVELVDEQDRELYLKKILAEVKDTYDFILIDCPPSLGILTLNGLAAANEVFIPLQCEYFALEGLTLLLQTVKRVQSGLNTALSIGGIFFTMYDTRTKLAQEVVKQVTTYFGDKVFNTIIPRNVKLSEAPSHGLPISSYDAQCAGARSYEKLAREIVARDGQR.

ATP-binding residues include Lys11, Gly12, Gly13, Val14, Gly15, Lys16, Thr17, Thr18, Pro211, and Asn213. Mg(2+) is bound at residue Thr17.

It belongs to the ParA family.

The enzyme catalyses ATP + H2O = ADP + phosphate + H(+). ATPase probably involved in chromosome partitioning. Cooperatively binds dsDNA, forming nucleoprotein filaments in a strictly ATP-dependent fashion. This Treponema pallidum (strain Nichols) protein is Chromosome-partitioning ATPase Soj.